Reading from the N-terminus, the 81-residue chain is Sulfur carrier protein TusA (81 aa).

Cysteine 19 acts as the Cysteine persulfide intermediate in catalysis.

The protein belongs to the sulfur carrier protein TusA family. In terms of assembly, interacts with IscS.

It localises to the cytoplasm. It functions in the pathway tRNA modification. Its function is as follows. Sulfur carrier protein involved in sulfur trafficking in the cell. Part of a sulfur-relay system required for 2-thiolation during synthesis of 2-thiouridine of the modified wobble base 5-methylaminomethyl-2-thiouridine (mnm(5)s(2)U) in tRNA. Interacts with IscS and stimulates its cysteine desulfurase activity. Accepts an activated sulfur from IscS, which is then transferred to TusD, and thus determines the direction of sulfur flow from IscS to 2-thiouridine formation. Also appears to be involved in sulfur transfer for the biosynthesis of molybdopterin. This is Sulfur carrier protein TusA from Erwinia tasmaniensis (strain DSM 17950 / CFBP 7177 / CIP 109463 / NCPPB 4357 / Et1/99).